Here is a 493-residue protein sequence, read N- to C-terminus: Lysine--tRNA ligase (493 aa).

The Mg(2+) site is built by Glu-402 and Glu-409.

It belongs to the class-II aminoacyl-tRNA synthetase family. As to quaternary structure, homodimer. The cofactor is Mg(2+).

The protein resides in the cytoplasm. The catalysed reaction is tRNA(Lys) + L-lysine + ATP = L-lysyl-tRNA(Lys) + AMP + diphosphate. This chain is Lysine--tRNA ligase, found in Ureaplasma parvum serovar 3 (strain ATCC 27815 / 27 / NCTC 11736).